The following is a 484-amino-acid chain: Glycogen synthase (484 aa).

Residue Lys-20 participates in ADP-alpha-D-glucose binding.

The protein belongs to the glycosyltransferase 1 family. Bacterial/plant glycogen synthase subfamily.

The enzyme catalyses [(1-&gt;4)-alpha-D-glucosyl](n) + ADP-alpha-D-glucose = [(1-&gt;4)-alpha-D-glucosyl](n+1) + ADP + H(+). The protein operates within glycan biosynthesis; glycogen biosynthesis. Functionally, synthesizes alpha-1,4-glucan chains using ADP-glucose. The chain is Glycogen synthase from Vibrio atlanticus (strain LGP32) (Vibrio splendidus (strain Mel32)).